The sequence spans 534 residues: Probable bifunctional tRNA threonylcarbamoyladenosine biosynthesis protein (534 aa).

Residues 1–325 (MLCLGIEGTA…YRTDEVDVPW (325 aa)) form a kae1 region. The Fe cation site is built by histidine 108, histidine 112, and tyrosine 129. L-threonylcarbamoyladenylate contacts are provided by residues 129–133 (YVSGG), aspartate 161, glycine 174, glutamate 178, and asparagine 258. Fe cation is bound at residue aspartate 286. The 200-residue stretch at 335 to 534 (LPPDILAKGA…EIESRGRYTD (200 aa)) folds into the Protein kinase domain. ATP-binding positions include 340–348 (LAKGAEANI) and lysine 361. Residue aspartate 451 is the Proton acceptor; for kinase activity of the active site.

The protein in the N-terminal section; belongs to the KAE1 / TsaD family. This sequence in the C-terminal section; belongs to the protein kinase superfamily. Tyr protein kinase family. BUD32 subfamily. In terms of assembly, component of the KEOPS complex that consists of Kae1, Bud32, Cgi121 and Pcc1; the whole complex dimerizes. Fe(2+) is required as a cofactor.

The protein resides in the cytoplasm. It carries out the reaction L-seryl-[protein] + ATP = O-phospho-L-seryl-[protein] + ADP + H(+). It catalyses the reaction L-threonyl-[protein] + ATP = O-phospho-L-threonyl-[protein] + ADP + H(+). The catalysed reaction is L-threonylcarbamoyladenylate + adenosine(37) in tRNA = N(6)-L-threonylcarbamoyladenosine(37) in tRNA + AMP + H(+). Its function is as follows. Required for the formation of a threonylcarbamoyl group on adenosine at position 37 (t(6)A37) in tRNAs that read codons beginning with adenine. Is a component of the KEOPS complex that is probably involved in the transfer of the threonylcarbamoyl moiety of threonylcarbamoyl-AMP (TC-AMP) to the N6 group of A37. The Kae1 domain likely plays a direct catalytic role in this reaction. The Bud32 domain probably displays kinase activity that regulates Kae1 function. The polypeptide is Probable bifunctional tRNA threonylcarbamoyladenosine biosynthesis protein (Methanothermobacter thermautotrophicus (strain ATCC 29096 / DSM 1053 / JCM 10044 / NBRC 100330 / Delta H) (Methanobacterium thermoautotrophicum)).